Reading from the N-terminus, the 185-residue chain is MVSKVALLLAVLVCSQYMAQGVYVVSKAEWGGRGAKWTVALGNYLSYAIIHHTAGSYCETRAQCNAVLQSVQAYHMDSLGWPDIGYNFLIGGDGNVYEGRGWNNMGAHAAEWNPYSIGISFLGNYNWDTLEPNMISAAQQLLNDAVNRGQLSSGYILYGHRQVSATECPGTHIWNEIRGWSHWSG.

The N-terminal stretch at 1-21 (MVSKVALLLAVLVCSQYMAQG) is a signal peptide. In terms of domain architecture, N-acetylmuramoyl-L-alanine amidase spans 46–170 (SYAIIHHTAG…RQVSATECPG (125 aa)). Zn(2+) is bound at residue His51. An intrachain disulfide couples Cys58 to Cys64. Zn(2+) is bound by residues His160 and Cys168.

It belongs to the N-acetylmuramoyl-L-alanine amidase 2 family. Zn(2+) serves as cofactor.

It is found in the secreted. The catalysed reaction is Hydrolyzes the link between N-acetylmuramoyl residues and L-amino acid residues in certain cell-wall glycopeptides.. Its function is as follows. N-acetylmuramyl-L-alanine amidase involved in innate immunity by degrading bacterial peptidoglycans (PGN). Plays a scavenger role by digesting biologically active PGN into biologically inactive fragments. Has no direct bacteriolytic activity. The polypeptide is Peptidoglycan-recognition protein SC1a/b (PGRP-SC1a) (Drosophila simulans (Fruit fly)).